A 224-amino-acid chain; its full sequence is PKHD-type hydroxylase SO_3913 (224 aa).

Residues 78 to 176 (QFYPPLFNRY…RTSAFMWLQS (99 aa)) enclose the Fe2OG dioxygenase domain. Residues H96, D98, and H157 each coordinate Fe cation. Residue R167 coordinates 2-oxoglutarate.

Fe(2+) is required as a cofactor. It depends on L-ascorbate as a cofactor.

This Shewanella oneidensis (strain ATCC 700550 / JCM 31522 / CIP 106686 / LMG 19005 / NCIMB 14063 / MR-1) protein is PKHD-type hydroxylase SO_3913.